Reading from the N-terminus, the 628-residue chain is (+)-alpha pinene synthase 1, chloroplastic (628 aa).

Residues Asp379, Asp383, and Asp531 each coordinate Mg(2+). The short motif at 379-383 (DDIYD) is the DDXXD motif element.

The protein belongs to the terpene synthase family. Tpsd subfamily. It depends on Mg(2+) as a cofactor. Requires Mn(2+) as cofactor.

It is found in the plastid. It localises to the chloroplast. It carries out the reaction (2E)-geranyl diphosphate = (1R,5R)-alpha-pinene + diphosphate. The protein operates within terpene metabolism; oleoresin biosynthesis. Its pathway is secondary metabolite biosynthesis; terpenoid biosynthesis. Its function is as follows. Monoterpene synthase (TPS) involved in the biosynthesis of monoterpene natural products included in conifer oleoresin secretions and volatile emissions; these compounds contribute to biotic and abiotic stress defense against herbivores and pathogens. Catalyzes the conversion of (2E)-geranyl diphosphate (GPP) to (+)-alpha-pinene. The chain is (+)-alpha pinene synthase 1, chloroplastic from Pinus contorta (Shore pine).